The chain runs to 756 residues: Putative DNA ligase 052L (756 aa).

Lys-103 acts as the N6-AMP-lysine intermediate in catalysis. A compositionally biased stretch (low complexity) spans Pro-610–Arg-620. The segment at Pro-610 to Asp-630 is disordered. A BRCT domain is found at Lys-648–Arg-742.

Belongs to the NAD-dependent DNA ligase family.

It carries out the reaction NAD(+) + (deoxyribonucleotide)n-3'-hydroxyl + 5'-phospho-(deoxyribonucleotide)m = (deoxyribonucleotide)n+m + AMP + beta-nicotinamide D-nucleotide.. Its function is as follows. Catalyzes the formation of phosphodiester linkages between 5'-phosphoryl and 3'-hydroxyl groups in double-stranded DNA using NAD as a coenzyme and as the energy source for the reaction. This chain is Putative DNA ligase 052L, found in Invertebrate iridescent virus 3 (IIV-3).